Here is a 234-residue protein sequence, read N- to C-terminus: MTKRVALEPAFILHRRPYSNTSLILELLTPNHGRVCALARSARGLKSRYKGKLELFSPLLISWSGRSDLKFLGDVEANGMPYLLEGEALLCGFYLNELLIRLLHHDDPYLRLFHHYQNTLEKLVNGRLEATLRCFEKQLLDELGYGLPLSCDVEMKLPFKPDQFYQYLPDRGFLLCEKSEESEERDVFSGKSLLALQEESFSDESSLKEIKYLMRLTLNRLLGKKPLKTRELLF.

This sequence belongs to the RecO family.

Functionally, involved in DNA repair and RecF pathway recombination. This is DNA repair protein RecO from Coxiella burnetii (strain RSA 331 / Henzerling II).